The sequence spans 635 residues: Chaperone protein HtpG (635 aa).

An a; substrate-binding region spans residues 1-346; it reads MSQTTTTSAS…SADLPLNVSR (346 aa). The tract at residues 347–563 is b; that stretch reads EILQESRDVR…QNELSPHLLR (217 aa). Residues 564-635 form a c region; it reads MLKAAGQEAP…KRLNGLLLKA (72 aa).

The protein belongs to the heat shock protein 90 family. Homodimer.

It is found in the cytoplasm. Its function is as follows. Molecular chaperone. Has ATPase activity. The polypeptide is Chaperone protein HtpG (Bordetella pertussis (strain Tohama I / ATCC BAA-589 / NCTC 13251)).